The following is a 497-amino-acid chain: Signal recognition particle subunit SRP54 1 (497 aa).

Residues Met1–Leu295 form a G-domain region. Residues Gly108–Thr115, Asp190–Arg194, and Thr248–Asp251 contribute to the GTP site. An M-domain region spans residues Gly296 to Asp497.

Belongs to the GTP-binding SRP family. SRP54 subfamily. As to quaternary structure, component of a signal recognition particle (SRP) complex that consists of a 7SL RNA molecule of 300 nucleotides and six protein subunits: SRP72, SRP68, SRP54, SRP19, SRP14 and SRP9.

The protein resides in the cytoplasm. It is found in the endoplasmic reticulum. It catalyses the reaction GTP + H2O = GDP + phosphate + H(+). Its function is as follows. Component of the signal recognition particle (SRP) complex, a ribonucleoprotein complex that mediates the cotranslational targeting of secretory and membrane proteins to the endoplasmic reticulum (ER). As part of the SRP complex, associates with the SRP receptor (SR) component SRPRA to target secretory proteins to the endoplasmic reticulum membrane. Binds to the signal sequence of presecretory proteins when they emerge from the ribosomes. Displays basal GTPase activity, and stimulates reciprocal GTPase activation of the SR subunit SRPRA. Forms a guanosine 5'-triphosphate (GTP)-dependent complex with the SR subunit SRPRA. SR compaction and GTPase mediated rearrangement of SR drive SRP-mediated cotranslational protein translocation into the ER. Requires the presence of SRP9/SRP14 and/or SRP19 to stably interact with RNA. This chain is Signal recognition particle subunit SRP54 1 (SRP54-1), found in Hordeum vulgare (Barley).